The sequence spans 90 residues: Probable Fe(2+)-trafficking protein (90 aa).

This sequence belongs to the Fe(2+)-trafficking protein family. Monomer.

Functionally, could be a mediator in iron transactions between iron acquisition and iron-requiring processes, such as synthesis and/or repair of Fe-S clusters in biosynthetic enzymes. The protein is Probable Fe(2+)-trafficking protein of Yersinia enterocolitica serotype O:8 / biotype 1B (strain NCTC 13174 / 8081).